We begin with the raw amino-acid sequence, 140 residues long: uncharacterized protein (140 aa).

This is an uncharacterized protein from Mycoplasma pneumoniae (strain ATCC 29342 / M129 / Subtype 1) (Mycoplasmoides pneumoniae).